The following is a 155-amino-acid chain: Cytochrome c-type biogenesis protein CcmE (155 aa).

Topologically, residues Met-1–Arg-8 are cytoplasmic. A helical; Signal-anchor for type II membrane protein transmembrane segment spans residues Leu-9–Ala-29. The Periplasmic segment spans residues Leu-30–Gln-155. Residues His-124 and Tyr-128 each contribute to the heme site.

This sequence belongs to the CcmE/CycJ family.

The protein localises to the cell inner membrane. Its function is as follows. Heme chaperone required for the biogenesis of c-type cytochromes. Transiently binds heme delivered by CcmC and transfers the heme to apo-cytochromes in a process facilitated by CcmF and CcmH. In Azotobacter vinelandii (strain DJ / ATCC BAA-1303), this protein is Cytochrome c-type biogenesis protein CcmE.